A 195-amino-acid polypeptide reads, in one-letter code: ATP synthase subunit b (195 aa).

Residues 28 to 48 (IFPNVYVLIAHVISLIFLLLL) traverse the membrane as a helical segment.

It belongs to the ATPase B chain family. In terms of assembly, F-type ATPases have 2 components, F(1) - the catalytic core - and F(0) - the membrane proton channel. F(1) has five subunits: alpha(3), beta(3), gamma(1), delta(1), epsilon(1). F(0) has three main subunits: a(1), b(2) and c(10-14). The alpha and beta chains form an alternating ring which encloses part of the gamma chain. F(1) is attached to F(0) by a central stalk formed by the gamma and epsilon chains, while a peripheral stalk is formed by the delta and b chains.

It localises to the cell membrane. In terms of biological role, f(1)F(0) ATP synthase produces ATP from ADP in the presence of a proton or sodium gradient. F-type ATPases consist of two structural domains, F(1) containing the extramembraneous catalytic core and F(0) containing the membrane proton channel, linked together by a central stalk and a peripheral stalk. During catalysis, ATP synthesis in the catalytic domain of F(1) is coupled via a rotary mechanism of the central stalk subunits to proton translocation. Component of the F(0) channel, it forms part of the peripheral stalk, linking F(1) to F(0). This chain is ATP synthase subunit b, found in Malacoplasma penetrans (strain HF-2) (Mycoplasma penetrans).